The primary structure comprises 488 residues: Adenylosuccinate synthetase 1, chloroplastic (488 aa).

A chloroplast-targeting transit peptide spans M1 to S47. Residues G75–K81 and G103–T105 each bind GTP. The active-site Proton acceptor is the D76. Residues D76 and G103 each coordinate Mg(2+). Residues D76 to K79, N101 to H104, T193, R207, Q287, T302, and R366 contribute to the IMP site. The active-site Proton donor is the H104. Position 362–368 (T362–R368) interacts with substrate. GTP contacts are provided by residues R368, K394–D396, and G477–G479.

The protein belongs to the adenylosuccinate synthetase family. As to quaternary structure, homodimer. It depends on Mg(2+) as a cofactor.

It localises to the plastid. The protein resides in the chloroplast. The enzyme catalyses IMP + L-aspartate + GTP = N(6)-(1,2-dicarboxyethyl)-AMP + GDP + phosphate + 2 H(+). The protein operates within purine metabolism; AMP biosynthesis via de novo pathway; AMP from IMP: step 1/2. Plays an important role in the de novo pathway and in the salvage pathway of purine nucleotide biosynthesis. Catalyzes the first committed step in the biosynthesis of AMP from IMP. In Oryza sativa subsp. japonica (Rice), this protein is Adenylosuccinate synthetase 1, chloroplastic.